The chain runs to 157 residues: Transmembrane protein 50A (157 aa).

Residue serine 2 is modified to N-acetylserine. Phosphoserine is present on serine 2. Helical transmembrane passes span isoleucine 26–tyrosine 46, alanine 58–valine 78, isoleucine 95–leucine 115, and isoleucine 126–valine 146.

Belongs to the UPF0220 family.

The protein resides in the membrane. The chain is Transmembrane protein 50A (TMEM50A) from Homo sapiens (Human).